We begin with the raw amino-acid sequence, 55 residues long: Small ribosomal subunit protein bS21 (55 aa).

Belongs to the bacterial ribosomal protein bS21 family.

This Ureaplasma parvum serovar 3 (strain ATCC 27815 / 27 / NCTC 11736) protein is Small ribosomal subunit protein bS21.